A 213-amino-acid chain; its full sequence is Phospho-2-dehydro-3-deoxyheptonate aldolase, Tyr-sensitive (213 aa).

Belongs to the class-I DAHP synthase family.

The enzyme catalyses D-erythrose 4-phosphate + phosphoenolpyruvate + H2O = 7-phospho-2-dehydro-3-deoxy-D-arabino-heptonate + phosphate. The protein operates within metabolic intermediate biosynthesis; chorismate biosynthesis; chorismate from D-erythrose 4-phosphate and phosphoenolpyruvate: step 1/7. In terms of biological role, stereospecific condensation of phosphoenolpyruvate (PEP) and D-erythrose-4-phosphate (E4P) giving rise to 3-deoxy-D-arabino-heptulosonate-7-phosphate (DAHP). This chain is Phospho-2-dehydro-3-deoxyheptonate aldolase, Tyr-sensitive (aroF), found in Enterobacter agglomerans (Erwinia herbicola).